The following is a 291-amino-acid chain: Halorhodopsin (291 aa).

The Extracellular portion of the chain corresponds to 1–30 (MTETLPPVTESAVALQAEVTQRELFEFVLN). A helical transmembrane segment spans residues 31–56 (DPLLASSLYINIALAGLSILLFVFMT). Residues 57-62 (RGLDDP) are Cytoplasmic-facing. The helical transmembrane segment at 63–86 (RAKLIAVSTILVPVVSIASYTGLA) threads the bilayer. Topologically, residues 87–120 (SGLTISVLEMPAGHFAEGSSVMLGGEEVDGVVTM) are extracellular. A helical membrane pass occupies residues 121–142 (WGRYLTWALSTPMILLALGLLA). At 143 to 145 (GSN) the chain is on the cytoplasmic side. The helical transmembrane segment at 146–169 (ATKLFTAITFDIAMCVTGLAAALT) threads the bilayer. The Extracellular segment spans residues 170-172 (TSS). Residues 173–195 (HLMRWFWYAISCACFLVVLYILL) form a helical membrane-spanning segment. Over 196 to 207 (VEWAQDAKAAGT) the chain is Cytoplasmic. Residues 208–231 (ADMFNTLKLLTVVMWLGYPIVWAL) traverse the membrane as a helical segment. Residues 232-240 (GVEGIAVLP) lie on the Extracellular side of the membrane. Residues 241-269 (VGVTSWGYSFLDIVAKYIFAFLLLNYLTS) traverse the membrane as a helical segment. Lysine 256 carries the post-translational modification N6-(retinylidene)lysine. The Cytoplasmic segment spans residues 270-291 (NESVVSGSILDVPSASGTPADD).

This sequence belongs to the archaeal/bacterial/fungal opsin family.

Its subcellular location is the cell membrane. Light-driven anion pump. Binding affinity for the anions is in the order, bromide &gt; chloride &gt; nitrate &gt; azide &gt; bromate and binding is pH dependent. The sequence is that of Halorhodopsin (hop) from Natronomonas pharaonis (Natronobacterium pharaonis).